Reading from the N-terminus, the 443-residue chain is MSTFIGQLIGFAVIVFLLVRFVVPPVRRMMTAQQETVRRQLEESSTAANKVAQADQQHAKAVEEAKADARRVVDEARSDAEKIAEQMRAQADAEVERIKVQGQAQVQLLRQQLIRELRSHLGTESVARARELVRDHVSDDDNRSATVDRFLDELDAMAPSDAALDDAVGSRMRSTSRESLKALVSRFDELTADVDADGLTSLGDELAAVAKLLKTEPVLGKHFGEPTEDGEGKANLAEAVLSGKISDTALEVVKAAVAQRWSDESDLDYAVRHTARLALLVRAERNDETSEVEDQLFRFSRILDSESRLSGVLSDYTTPVDGRIGLLDRLLGDQAGETTRALLAQTVELLRGERADEAVRELAELAVARRGEVVAHVNAAAELSDAQRTRLAEVLGRIYGRPASLQLHIDPDMLGGLTIAVGDEVIDGSLASRLASAETQLPD.

The segment at 1 to 168 (MSTFIGQLIG…PSDAALDDAV (168 aa)) is ATP synthase subunit b. The helical transmembrane segment at 4-24 (FIGQLIGFAVIVFLLVRFVVP) threads the bilayer. The interval 169 to 443 (GSRMRSTSRE…LASAETQLPD (275 aa)) is ATP synthase subunit delta.

This sequence in the N-terminal section; belongs to the ATPase B chain family. The protein in the C-terminal section; belongs to the ATPase delta chain family. As to quaternary structure, F-type ATPases have 2 components, F(1) - the catalytic core - and F(0) - the membrane proton channel. F(1) has five subunits: alpha(3), beta(3), gamma(1), delta(1), epsilon(1). F(0) has three main subunits: a(1), b(2) and c(10-14). The alpha and beta chains form an alternating ring which encloses part of the gamma chain. F(1) is attached to F(0) by a central stalk formed by the gamma and epsilon chains, while a peripheral stalk is formed by the delta and b chains.

The protein resides in the cell membrane. In terms of biological role, f(1)F(0) ATP synthase produces ATP from ADP in the presence of a proton or sodium gradient. F-type ATPases consist of two structural domains, F(1) containing the extramembraneous catalytic core and F(0) containing the membrane proton channel, linked together by a central stalk and a peripheral stalk. During catalysis, ATP synthesis in the catalytic domain of F(1) is coupled via a rotary mechanism of the central stalk subunits to proton translocation. This fusion protein includes a component of the F(0) channel (subunit b) and of the F(1) subunit (subunit delta). Two copies of subunit b and one of delta together form the peripheral 'stator' stalk which links F(1) to F(0). In Mycobacterium sp. (strain JLS), this protein is ATP synthase subunit b-delta (atpFH).